A 485-amino-acid polypeptide reads, in one-letter code: uncharacterized protein (485 aa).

The next 10 membrane-spanning stretches (helical) occupy residues I9–Q29, P66–L86, Y98–L118, V131–I151, F159–I179, N194–A214, N259–L279, L293–L313, V322–E342, and I350–I370.

It is found in the host membrane. This is an uncharacterized protein from Salmonella typhimurium (Bacteriophage P22).